Here is a 685-residue protein sequence, read N- to C-terminus: Transforming growth factor beta activator LRRC33 (685 aa).

The N-terminal stretch at 1-27 (MPVCGCLSVVLSHAVVLLMLVLHSASG) is a signal peptide. Over 28 to 640 (HPQTFPCRLI…CGFTNNNKES (613 aa)) the chain is Extracellular. The LRRNT domain occupies 29–56 (PQTFPCRLIQRVALCSGRQLSVIPDCLP). 7 LRR repeats span residues 57 to 79 (HETE…LSRY), 80 to 102 (PFLR…AFIE), 103 to 129 (SHLL…AFRS), 130 to 154 (LTQL…LVAN), 155 to 178 (LSSL…TFRD), 180 to 201 (HQLK…AFDH), and 202 to 225 (MKKL…EMTQ). Asn-154 carries an N-linked (GlcNAc...) asparagine glycan. Asn-230 and Asn-244 each carry an N-linked (GlcNAc...) asparagine glycan. 2 LRR repeats span residues 248–271 (TFQL…PTNN) and 273–296 (IRTL…TSSN). N-linked (GlcNAc...) asparagine glycosylation is found at Asn-291, Asn-296, Asn-309, Asn-312, and Asn-325. 11 LRR repeats span residues 326–349 (LSSV…FIKQ), 351–373 (PQLY…SEDL), 374–397 (PVTI…QTSK), 400–423 (LNNL…IFTS), 425–447 (PNLN…NYMG), 457–480 (MASL…AFKG), 482–503 (SLTH…SLKG), 505–526 (ANTL…FSPY), 527–549 (TNLK…LMAL), 551–571 (LKLL…HASL), and 573–596 (AKKL…WFRT). 2 N-linked (GlcNAc...) asparagine glycosylation sites follow: Asn-402 and Asn-407. N-linked (GlcNAc...) asparagine glycosylation occurs at Asn-533. The region spanning 597 to 635 (FGENKGIHVADLSEITCLDLNYRRHKVVLTDAVYCGFTN) is the LRRCT domain. Residues 641–661 (VVWYILLFVTVSVSIMGISVI) form a helical membrane-spanning segment. The Cytoplasmic segment spans residues 662–685 (YMLTFKPRMLPRVIKKKCWRPTSY).

It belongs to the LRRC32/LRRC33 family.

It localises to the cell membrane. It is found in the endoplasmic reticulum membrane. In terms of biological role, key regulator of transforming growth factor beta-1 (TGFB1) specifically required for microglia function in the nervous system. Required for activation of latent TGF-beta-1 in macrophages and microglia: associates specifically via disulfide bonds with the Latency-associated peptide (LAP), which is the regulatory chain of TGFB1, and regulates integrin-dependent activation of TGF-beta-1. TGF-beta-1 activation mediated by lrrc33/nrros is highly localized: there is little spreading of TGF-beta-1 activated from one microglial cell to neighboring microglia, suggesting the existence of localized and selective activation of TGF-beta-1 by lrrc33/nrros. The polypeptide is Transforming growth factor beta activator LRRC33 (Danio rerio (Zebrafish)).